The chain runs to 319 residues: Ferrochelatase (319 aa).

2 residues coordinate Fe cation: histidine 194 and glutamate 275.

The protein belongs to the ferrochelatase family.

It is found in the cytoplasm. The enzyme catalyses heme b + 2 H(+) = protoporphyrin IX + Fe(2+). It functions in the pathway porphyrin-containing compound metabolism; protoheme biosynthesis; protoheme from protoporphyrin-IX: step 1/1. Functionally, catalyzes the ferrous insertion into protoporphyrin IX. The sequence is that of Ferrochelatase from Hamiltonella defensa subsp. Acyrthosiphon pisum (strain 5AT).